The sequence spans 247 residues: Caffeoyl-CoA O-methyltransferase (247 aa).

Residue K21 coordinates substrate. Residues T63, E85, 87–88 (GV), S93, D111, and A140 contribute to the S-adenosyl-L-methionine site. A substrate-binding site is contributed by D163. D163 lines the a divalent metal cation pocket. Position 165 (D165) interacts with S-adenosyl-L-methionine. Positions 189 and 190 each coordinate a divalent metal cation. N194 serves as a coordination point for substrate.

The protein belongs to the class I-like SAM-binding methyltransferase superfamily. Cation-dependent O-methyltransferase family. CCoAMT subfamily. Requires a divalent metal cation as cofactor.

It carries out the reaction (E)-caffeoyl-CoA + S-adenosyl-L-methionine = (E)-feruloyl-CoA + S-adenosyl-L-homocysteine + H(+). It functions in the pathway aromatic compound metabolism; phenylpropanoid biosynthesis. In terms of biological role, methylates caffeoyl-CoA to feruloyl-CoA and 5-hydroxyferuloyl-CoA to sinapoyl-CoA. Plays a role in the synthesis of feruloylated polysaccharides. Involved in the reinforcement of the plant cell wall. Also involved in the responding to wounding or pathogen challenge by the increased formation of cell wall-bound ferulic acid polymers. This is Caffeoyl-CoA O-methyltransferase from Populus tremuloides (Quaking aspen).